Reading from the N-terminus, the 220-residue chain is Deoxyribose-phosphate aldolase (220 aa).

The Proton donor/acceptor role is filled by D89. K151 serves as the catalytic Schiff-base intermediate with acetaldehyde. K180 functions as the Proton donor/acceptor in the catalytic mechanism.

It belongs to the DeoC/FbaB aldolase family. DeoC type 1 subfamily.

The protein resides in the cytoplasm. The enzyme catalyses 2-deoxy-D-ribose 5-phosphate = D-glyceraldehyde 3-phosphate + acetaldehyde. Its pathway is carbohydrate degradation; 2-deoxy-D-ribose 1-phosphate degradation; D-glyceraldehyde 3-phosphate and acetaldehyde from 2-deoxy-alpha-D-ribose 1-phosphate: step 2/2. Catalyzes a reversible aldol reaction between acetaldehyde and D-glyceraldehyde 3-phosphate to generate 2-deoxy-D-ribose 5-phosphate. This Streptococcus pneumoniae (strain CGSP14) protein is Deoxyribose-phosphate aldolase.